The sequence spans 332 residues: MAASELIDTFGRRISYLRLSVTDRCDLRCTYCMPERMQFLPRAEVLTLEELRDLAVGFMRRGITKIRLTGGEPLVRRDVVDLIRALGRHVGDGLEELTLTTNGTQLAGHAQAIADAGVKRINISLDTLDRATFQRLSRRDALASVLGGIAAAKAAGLKIKINTVAMKGVNGHEIPALIEWAHGEGHDVTLIETMPLGEVDEDRTDQFLPLVAVRESLEARWTLTDSDHRTGGPSRYVEVAETGGRLGFITPLTNNFCAGCNRVRVTATGQLYPCLGGGERVDLRAALRSDDPDSNLSTALDTAMKIKPERHDFRIGEGEEPALARHMSMTGG.

The region spanning 9–234 (TFGRRISYLR…DSDHRTGGPS (226 aa)) is the Radical SAM core domain. R18 contributes to the GTP binding site. Residues C25 and C29 each contribute to the [4Fe-4S] cluster site. Residue Y31 coordinates S-adenosyl-L-methionine. Position 32 (C32) interacts with [4Fe-4S] cluster. GTP is bound at residue R67. S-adenosyl-L-methionine is bound at residue G71. T100 contacts GTP. S124 lines the S-adenosyl-L-methionine pocket. K160 is a binding site for GTP. M194 serves as a coordination point for S-adenosyl-L-methionine. Residues C257 and C260 each contribute to the [4Fe-4S] cluster site. A GTP-binding site is contributed by 262-264 (RVR). C274 lines the [4Fe-4S] cluster pocket.

Belongs to the radical SAM superfamily. MoaA family. Monomer and homodimer. [4Fe-4S] cluster is required as a cofactor.

It catalyses the reaction GTP + AH2 + S-adenosyl-L-methionine = (8S)-3',8-cyclo-7,8-dihydroguanosine 5'-triphosphate + 5'-deoxyadenosine + L-methionine + A + H(+). It participates in cofactor biosynthesis; molybdopterin biosynthesis. Its function is as follows. Catalyzes the cyclization of GTP to (8S)-3',8-cyclo-7,8-dihydroguanosine 5'-triphosphate. The polypeptide is GTP 3',8-cyclase (Erythrobacter litoralis (strain HTCC2594)).